The following is a 190-amino-acid chain: Superoxide dismutase [Fe] (190 aa).

Fe cation is bound by residues His-27, His-75, Asp-156, and His-160.

Belongs to the iron/manganese superoxide dismutase family. In terms of assembly, homodimer. The cofactor is Fe cation.

The enzyme catalyses 2 superoxide + 2 H(+) = H2O2 + O2. Functionally, destroys superoxide anion radicals which are normally produced within the cells and which are toxic to biological systems. The sequence is that of Superoxide dismutase [Fe] (SODB) from Entamoeba histolytica (strain ATCC 30459 / HM-1:IMSS / ABRM).